The sequence spans 266 residues: Lipooligosaccharide biosynthesis protein lic2B (266 aa).

This sequence belongs to the glycosyltransferase 25 family.

In terms of biological role, involved in extracellular lipooligosaccharide (LOS) biosynthesis and virulence expression. Involved in the synthesis of the oligosaccharide moiety of the LOS molecule by adding GalNAc. The polypeptide is Lipooligosaccharide biosynthesis protein lic2B (lic2B) (Haemophilus influenzae).